An 874-amino-acid chain; its full sequence is Alanine--tRNA ligase (874 aa).

Residues H562, H566, C664, and H668 each contribute to the Zn(2+) site.

It belongs to the class-II aminoacyl-tRNA synthetase family. Zn(2+) is required as a cofactor.

It localises to the cytoplasm. It carries out the reaction tRNA(Ala) + L-alanine + ATP = L-alanyl-tRNA(Ala) + AMP + diphosphate. Catalyzes the attachment of alanine to tRNA(Ala) in a two-step reaction: alanine is first activated by ATP to form Ala-AMP and then transferred to the acceptor end of tRNA(Ala). Also edits incorrectly charged Ser-tRNA(Ala) and Gly-tRNA(Ala) via its editing domain. The sequence is that of Alanine--tRNA ligase from Shewanella sediminis (strain HAW-EB3).